Consider the following 496-residue polypeptide: Gasdermin-E (496 aa).

A membrane targeting domain region spans residues methionine 1–leucine 56. Cysteine 45 is subject to S-(2-succinyl)cysteine. Lysine 120 participates in a covalent cross-link: Glycyl lysine isopeptide (Lys-Gly) (interchain with G-Cter in ubiquitin). 3 positions are modified to S-(2-succinyl)cysteine: cysteine 156, cysteine 168, and cysteine 180. Residue lysine 189 forms a Glycyl lysine isopeptide (Lys-Gly) (interchain with G-Cter in ubiquitin) linkage. 5 positions are modified to S-(2-succinyl)cysteine: cysteine 235, cysteine 371, cysteine 408, cysteine 417, and cysteine 489.

It belongs to the gasdermin family. In terms of assembly, homooligomer; homooligomeric ring-shaped pore complex containing 27-28 subunits when inserted in the membrane. Post-translationally, cleavage at Asp-270 by CASP3 (mature and uncleaved precursor forms) or granzyme B (GZMB) relieves autoinhibition and is sufficient to initiate pyroptosis. In terms of processing, succination by the Krebs cycle intermediate fumarate, which leads to S-(2-succinyl)cysteine residues, inhibits processing by caspases, and ability to initiate pyroptosis. Succination modification is catalyzed by a non-enzymatic reaction caused by an accumulation of fumarate. Ubiquitinated at Lys-120 and Lys-189 via 'Lys-48'-linked polyubiquitin chains, leading to proteasomal degradation. Deubiquitinated by USP48, leading to increased stability. Post-translationally, palmitoylated. Expressed in cochlea. Low level of expression in heart, brain, placenta, lung, liver, skeletal muscle, kidney and pancreas, with highest expression in placenta.

Its subcellular location is the cell membrane. It is found in the cytoplasm. The protein localises to the cytosol. With respect to regulation, the full-length protein before cleavage is inactive: intramolecular interactions between N- and C-terminal domains mediate autoinhibition in the absence of activation signal. The intrinsic pyroptosis-inducing activity is carried by the released N-terminal moiety (Gasdermin-E, N-terminal) following cleavage by CASP3 or granzyme B (GZMB). Activated by NLRP1 in the absence of GSDMD expression: NLRP1 cleaves and activates CASP8, promoting downstream activation of CASP3 and subsequent activation of GSDME. Its activity is regulated as follows. (Microbial infection) Activated upon human coronavirus SARS-CoV-2 infection, leading to lung epithelial cell death. Activation takes place in response to (1) activation of NLRP1 and (2) inactivation of GSDMD following NLRP1 and GSDMD cleavage by the SARS-CoV-2 3C-like proteinase nsp5. Precursor of a pore-forming protein that converts non-inflammatory apoptosis to pyroptosis. This form constitutes the precursor of the pore-forming protein: upon cleavage, the released N-terminal moiety (Gasdermin-E, N-terminal) binds to membranes and forms pores, triggering pyroptosis. Its function is as follows. Pore-forming protein produced by cleavage by CASP3 or granzyme B (GZMB), which converts non-inflammatory apoptosis to pyroptosis or promotes granzyme-mediated pyroptosis, respectively. After cleavage, moves to the plasma membrane, homooligomerizes within the membrane and forms pores of 10-15 nanometers (nm) of inner diameter, allowing the release of mature interleukins (IL1B and IL16) and triggering pyroptosis. Binds to inner leaflet lipids, bisphosphorylated phosphatidylinositols, such as phosphatidylinositol (4,5)-bisphosphate. Cleavage by CASP3 switches CASP3-mediated apoptosis induced by TNF or danger signals, such as chemotherapy drugs, to pyroptosis. Mediates secondary necrosis downstream of the mitochondrial apoptotic pathway and CASP3 activation as well as in response to viral agents. Exhibits bactericidal activity. Cleavage by GZMB promotes tumor suppressor activity by triggering robust anti-tumor immunity. Suppresses tumors by mediating granzyme-mediated pyroptosis in target cells of natural killer (NK) cells: cleavage by granzyme B (GZMB), delivered to target cells from NK-cells, triggers pyroptosis of tumor cells and tumor suppression. May play a role in the p53/TP53-regulated cellular response to DNA damage. Functionally, (Microbial infection) Pore-forming protein, which promotes maternal placental pyroptosis in response to Zika virus infection, contributing to adverse fetal outcomes. The sequence is that of Gasdermin-E from Homo sapiens (Human).